The sequence spans 213 residues: StAR-related lipid transfer protein 5 (213 aa).

The region spanning 1–213 is the START domain; sequence MDLATAAQVS…LEKAVKKFFG (213 aa).

Its function is as follows. May be involved in the intracellular transport of sterols or other lipids. May bind cholesterol or other sterols. This chain is StAR-related lipid transfer protein 5 (STARD5), found in Bos taurus (Bovine).